Here is a 216-residue protein sequence, read N- to C-terminus: Transmembrane protein 54 (216 aa).

4 helical membrane-spanning segments follow: residues 22 to 42, 62 to 82, 94 to 114, and 155 to 175; these read LVLV…HGTM, ILSV…VILS, VFSL…GLLA, and SSLC…MSAV.

It belongs to the TMEM54 family.

The protein localises to the membrane. This Rattus norvegicus (Rat) protein is Transmembrane protein 54 (Tmem54).